The sequence spans 241 residues: Probable transcriptional regulatory protein Rpic_2388 (241 aa).

It belongs to the TACO1 family.

The protein resides in the cytoplasm. The polypeptide is Probable transcriptional regulatory protein Rpic_2388 (Ralstonia pickettii (strain 12J)).